The chain runs to 574 residues: Aspartate--tRNA ligase (574 aa).

Glu169 provides a ligand contact to L-aspartate. The segment at 193 to 196 is aspartate; sequence QLFK. An L-aspartate-binding site is contributed by Arg215. ATP contacts are provided by residues 215–217 and Gln224; that span reads RDE. His437 is a binding site for L-aspartate. Residue Glu471 participates in ATP binding. Position 478 (Arg478) interacts with L-aspartate. Residue 523-526 participates in ATP binding; sequence GLDR.

Belongs to the class-II aminoacyl-tRNA synthetase family. Type 1 subfamily. As to quaternary structure, homodimer.

It is found in the cytoplasm. It carries out the reaction tRNA(Asp) + L-aspartate + ATP = L-aspartyl-tRNA(Asp) + AMP + diphosphate. Functionally, catalyzes the attachment of L-aspartate to tRNA(Asp) in a two-step reaction: L-aspartate is first activated by ATP to form Asp-AMP and then transferred to the acceptor end of tRNA(Asp). The polypeptide is Aspartate--tRNA ligase (Mycoplasma mycoides subsp. mycoides SC (strain CCUG 32753 / NCTC 10114 / PG1)).